We begin with the raw amino-acid sequence, 474 residues long: MSKKLHIKTWGCQMNEYDSSKMADLLGEYQGYTLTEDASEADILLLNTCSIREKAQEKVFHQLGRWKTLKDKNPNLIIGVGGCVASQEGKAIKDRAQCVDIIFGPQTLHRLPDMIEQVRRGDKAVIDISFPEIEKFDRLPEPRAEGPTAFVSIMEGCSKYCSFCVVPYTRGEEVSRPLDDIILEIAQLAEQGVREVNLLGQNVNAYRGATHDGSICSFAELLRFVAAIDGIDRIRFTTSHPIEFTQDIIDVYEDTPELVSFLHLPVQSGSDRILTAMKRGHMAIEYKSIIRRLRKAREGIQISSDFIIGFPGETKEDFADTMKLIEEIGFDHSFSFIYSARPGTPAADLPDNVDMEEKKQRLAILQDRITQQAMRYSRHMMGTVQRILVEGPSVKNPMELRGRTENNRVVNFEGLPKHIGTFVDVEIVDVYTNSLRGKFIRGEDEMDLRRSLRPAEILAKRKQDDELGVTQFKP.

Positions 3–120 (KKLHIKTWGC…LPDMIEQVRR (118 aa)) constitute an MTTase N-terminal domain. Residues cysteine 12, cysteine 49, cysteine 83, cysteine 157, cysteine 161, and cysteine 164 each coordinate [4Fe-4S] cluster. Positions 143-375 (RAEGPTAFVS…QDRITQQAMR (233 aa)) constitute a Radical SAM core domain. The TRAM domain occupies 378–441 (RHMMGTVQRI…TNSLRGKFIR (64 aa)).

This sequence belongs to the methylthiotransferase family. MiaB subfamily. In terms of assembly, monomer. It depends on [4Fe-4S] cluster as a cofactor.

The protein localises to the cytoplasm. It catalyses the reaction N(6)-dimethylallyladenosine(37) in tRNA + (sulfur carrier)-SH + AH2 + 2 S-adenosyl-L-methionine = 2-methylsulfanyl-N(6)-dimethylallyladenosine(37) in tRNA + (sulfur carrier)-H + 5'-deoxyadenosine + L-methionine + A + S-adenosyl-L-homocysteine + 2 H(+). In terms of biological role, catalyzes the methylthiolation of N6-(dimethylallyl)adenosine (i(6)A), leading to the formation of 2-methylthio-N6-(dimethylallyl)adenosine (ms(2)i(6)A) at position 37 in tRNAs that read codons beginning with uridine. In Shewanella sp. (strain W3-18-1), this protein is tRNA-2-methylthio-N(6)-dimethylallyladenosine synthase.